Reading from the N-terminus, the 225-residue chain is Transcription factor MYB1 (225 aa).

HTH myb-type domains follow at residues 11-67 and 68-118; these read LGRV…KPSI and KRGH…YKKH. 2 DNA-binding regions (H-T-H motif) span residues 39 to 63 and 91 to 114; these read WKRV…LNYL and WSLI…NTHL.

As to quaternary structure, no interactions with bHLH.

The protein resides in the nucleus. In terms of biological role, activates DODA1 and CYP76AD1 in the betalain red pigment pathway. This Beta vulgaris (Sugar beet) protein is Transcription factor MYB1.